We begin with the raw amino-acid sequence, 391 residues long: tRNA(Met) cytidine acetate ligase (391 aa).

ATP is bound by residues 7-20 (IAEYNPLHNGHIYQ), Gly-101, Asn-153, and Arg-178.

This sequence belongs to the TmcAL family.

The protein localises to the cytoplasm. The catalysed reaction is cytidine(34) in elongator tRNA(Met) + acetate + ATP = N(4)-acetylcytidine(34) in elongator tRNA(Met) + AMP + diphosphate. Catalyzes the formation of N(4)-acetylcytidine (ac(4)C) at the wobble position of elongator tRNA(Met), using acetate and ATP as substrates. First activates an acetate ion to form acetyladenylate (Ac-AMP) and then transfers the acetyl group to tRNA to form ac(4)C34. In Latilactobacillus sakei subsp. sakei (strain 23K) (Lactobacillus sakei subsp. sakei), this protein is tRNA(Met) cytidine acetate ligase.